A 370-amino-acid polypeptide reads, in one-letter code: Phosphate acyltransferase (370 aa).

The protein belongs to the PlsX family. Homodimer. Probably interacts with PlsY.

It is found in the cytoplasm. It carries out the reaction a fatty acyl-[ACP] + phosphate = an acyl phosphate + holo-[ACP]. The protein operates within lipid metabolism; phospholipid metabolism. In terms of biological role, catalyzes the reversible formation of acyl-phosphate (acyl-PO(4)) from acyl-[acyl-carrier-protein] (acyl-ACP). This enzyme utilizes acyl-ACP as fatty acyl donor, but not acyl-CoA. The protein is Phosphate acyltransferase of Paracoccus denitrificans (strain Pd 1222).